Consider the following 349-residue polypeptide: Holliday junction branch migration complex subunit RuvB (349 aa).

The tract at residues 1 to 181 (MDDRILTSVN…FGVLCPMEFY (181 aa)) is large ATPase domain (RuvB-L). Residues leucine 20, arginine 21, glycine 62, lysine 65, threonine 66, threonine 67, 128–130 (EDY), arginine 171, tyrosine 181, and arginine 218 each bind ATP. Threonine 66 contacts Mg(2+). A small ATPAse domain (RuvB-S) region spans residues 182 to 252 (NDEELKEIIV…SAKKALNLLE (71 aa)). Residues 255–349 (DEGFDSIDNK…DQCSFFKKEK (95 aa)) form a head domain (RuvB-H) region. Positions 310 and 315 each coordinate DNA.

It belongs to the RuvB family. Homohexamer. Forms an RuvA(8)-RuvB(12)-Holliday junction (HJ) complex. HJ DNA is sandwiched between 2 RuvA tetramers; dsDNA enters through RuvA and exits via RuvB. An RuvB hexamer assembles on each DNA strand where it exits the tetramer. Each RuvB hexamer is contacted by two RuvA subunits (via domain III) on 2 adjacent RuvB subunits; this complex drives branch migration. In the full resolvosome a probable DNA-RuvA(4)-RuvB(12)-RuvC(2) complex forms which resolves the HJ.

The protein resides in the cytoplasm. It carries out the reaction ATP + H2O = ADP + phosphate + H(+). The RuvA-RuvB-RuvC complex processes Holliday junction (HJ) DNA during genetic recombination and DNA repair, while the RuvA-RuvB complex plays an important role in the rescue of blocked DNA replication forks via replication fork reversal (RFR). RuvA specifically binds to HJ cruciform DNA, conferring on it an open structure. The RuvB hexamer acts as an ATP-dependent pump, pulling dsDNA into and through the RuvAB complex. RuvB forms 2 homohexamers on either side of HJ DNA bound by 1 or 2 RuvA tetramers; 4 subunits per hexamer contact DNA at a time. Coordinated motions by a converter formed by DNA-disengaged RuvB subunits stimulates ATP hydrolysis and nucleotide exchange. Immobilization of the converter enables RuvB to convert the ATP-contained energy into a lever motion, pulling 2 nucleotides of DNA out of the RuvA tetramer per ATP hydrolyzed, thus driving DNA branch migration. The RuvB motors rotate together with the DNA substrate, which together with the progressing nucleotide cycle form the mechanistic basis for DNA recombination by continuous HJ branch migration. Branch migration allows RuvC to scan DNA until it finds its consensus sequence, where it cleaves and resolves cruciform DNA. The sequence is that of Holliday junction branch migration complex subunit RuvB from Clostridium acetobutylicum (strain ATCC 824 / DSM 792 / JCM 1419 / IAM 19013 / LMG 5710 / NBRC 13948 / NRRL B-527 / VKM B-1787 / 2291 / W).